Consider the following 157-residue polypeptide: 6,7-dimethyl-8-ribityllumazine synthase 1 (157 aa).

5-amino-6-(D-ribitylamino)uracil-binding positions include Phe22, 53-55 (ALE), and 82-84 (TVI). A (2S)-2-hydroxy-3-oxobutyl phosphate-binding site is contributed by 87–88 (ET). Catalysis depends on His90, which acts as the Proton donor. Asn115 provides a ligand contact to 5-amino-6-(D-ribitylamino)uracil. His129 provides a ligand contact to (2S)-2-hydroxy-3-oxobutyl phosphate.

The protein belongs to the DMRL synthase family. Homopentamer.

The catalysed reaction is (2S)-2-hydroxy-3-oxobutyl phosphate + 5-amino-6-(D-ribitylamino)uracil = 6,7-dimethyl-8-(1-D-ribityl)lumazine + phosphate + 2 H2O + H(+). The protein operates within cofactor biosynthesis; riboflavin biosynthesis; riboflavin from 2-hydroxy-3-oxobutyl phosphate and 5-amino-6-(D-ribitylamino)uracil: step 1/2. Catalyzes the formation of 6,7-dimethyl-8-ribityllumazine by condensation of 5-amino-6-(D-ribitylamino)uracil with 3,4-dihydroxy-2-butanone 4-phosphate. This is the penultimate step in the biosynthesis of riboflavin. This Brucella abortus (strain 2308) protein is 6,7-dimethyl-8-ribityllumazine synthase 1 (ribH1).